We begin with the raw amino-acid sequence, 205 residues long: Ribosomal RNA small subunit methyltransferase G (205 aa).

S-adenosyl-L-methionine-binding positions include Gly-70, Leu-75, 124 to 125 (IE), and Arg-138.

It belongs to the methyltransferase superfamily. RNA methyltransferase RsmG family.

Its subcellular location is the cytoplasm. The catalysed reaction is guanosine(527) in 16S rRNA + S-adenosyl-L-methionine = N(7)-methylguanosine(527) in 16S rRNA + S-adenosyl-L-homocysteine. Its function is as follows. Specifically methylates the N7 position of guanine in position 527 of 16S rRNA. The polypeptide is Ribosomal RNA small subunit methyltransferase G (Ruegeria sp. (strain TM1040) (Silicibacter sp.)).